A 610-amino-acid chain; its full sequence is MTETKDLLQDEEFLKIRRLNSAEANKRHSVTYDNVILPQESMEVSPRSSTTSLVEPVESTEGVESTEAERVAGKQEQEEEYPVDAHMQKYLSHLKSKSRSRFHRKDASKYVSFFGDVSFDPRPTLLDSAINVPFQTTFKGPVLEKQLKNLQLTKTKTKATVKTTVKTTEKTDKADAPPGEKLESNFSGIYVFAWMFLGWIAIRCCTDYYASYGSAWNKLEIVQYMTTDLFTIAMLDLAMFLCTFFVVFVHWLVKKRIINWKWTGFVAVSIFELAFIPVTFPIYVYYFDFNWVTRIFLFLHSVVFVMKSHSFAFYNGYLWDIKQELEYSSKQLQKYKESLSPETREILQKSCDFCLFELNYQTKDNDFPNNISCSNFFMFCLFPVLVYQINYPRTSRIRWRYVLEKVCAIIGTIFLMMVTAQFFMHPVAMRCIQFHNTPTFGGWIPATQEWFHLLFDMIPGFTVLYMLTFYMIWDALLNCVAELTRFADRYFYGDWWNCVSFEEFSRIWNVPVHKFLLRHVYHSSMGALHLSKSQATLFTFFLSAVFHEMAMFAIFRRVRGYLFMFQLSQFVWTALSNTKFLRARPQLSNVVFSFGVCSGPSIIMTLYLTL.

A phosphoserine mark is found at serine 21 and serine 45. The tract at residues serine 41–tyrosine 81 is disordered. Residues glutamate 67 to glutamate 76 show a composition bias toward basic and acidic residues. The next 5 membrane-spanning stretches (helical) occupy residues leucine 182 to isoleucine 202, leucine 229 to valine 249, glycine 264 to valine 284, isoleucine 371 to tyrosine 391, and isoleucine 409 to methionine 429. The short motif at phenylalanine 491–asparagine 497 is the FYXDWWN motif element. Transmembrane regions (helical) follow at residues alanine 535–phenylalanine 555 and valine 590–leucine 610. The active site involves histidine 547.

Belongs to the membrane-bound acyltransferase family. Sterol o-acyltransferase subfamily.

Its subcellular location is the endoplasmic reticulum membrane. The catalysed reaction is lanosterol + an acyl-CoA = lanosteryl ester + CoA. Its function is as follows. Sterol O-acyltransferase that catalyzes the formation of stery esters. This is Sterol O-acyltransferase 1 from Saccharomyces cerevisiae (strain ATCC 204508 / S288c) (Baker's yeast).